A 185-amino-acid chain; its full sequence is Ribosome-recycling factor (185 aa).

Belongs to the RRF family.

Its subcellular location is the cytoplasm. In terms of biological role, responsible for the release of ribosomes from messenger RNA at the termination of protein biosynthesis. May increase the efficiency of translation by recycling ribosomes from one round of translation to another. The chain is Ribosome-recycling factor from Exiguobacterium sibiricum (strain DSM 17290 / CCUG 55495 / CIP 109462 / JCM 13490 / 255-15).